Reading from the N-terminus, the 114-residue chain is PDZK1-interacting protein 1 (114 aa).

The Extracellular segment spans residues 1-28 (MSVLSLVVLSLLMALPPASCQQGRGNLQ). A helical transmembrane segment spans residues 29-51 (PWMQGLIAVAVFLVLVAIAFAVN). Residues 52 to 114 (HFWCQEKPAP…EEGKVCSTPM (63 aa)) are Cytoplasmic-facing. At serine 85 the chain carries Phosphoserine.

The protein belongs to the PDZK1-interacting protein 1/SMIM24 family. Forms a heterodimer (via N-terminal transmembrane helix) with SLC5A2/SGLT2 (via TM13); this interaction enhances SLC5A2 transporter activity. Interacts with PDZK1.

The protein localises to the apical cell membrane. In terms of biological role, auxiliary protein of electrogenic Na(+)-coupled sugar symporter SLC5A2/SGLT2 and SLC5A1/SGLT1. Essential for the transporter activity of SLC5A2/SGLT2 but not SLC5A1/SGLT1. The polypeptide is PDZK1-interacting protein 1 (Bos taurus (Bovine)).